Consider the following 454-residue polypeptide: Bifunctional protein GlmU (454 aa).

The pyrophosphorylase stretch occupies residues 1-228 (MTLPLHVVIL…PQDVEGANDP (228 aa)). UDP-N-acetyl-alpha-D-glucosamine is bound by residues 10 to 13 (LAAG), Lys-24, Gln-76, 81 to 82 (GT), 103 to 105 (YGD), Gly-138, Glu-153, Asn-168, and Asn-226. Mg(2+) is bound at residue Asp-105. Asn-226 is a binding site for Mg(2+). Residues 229–249 (WQLAQLERAWQLRAARALCLQ) are linker. The interval 250–454 (GVRMADPARV…IEGWERPKKK (205 aa)) is N-acetyltransferase. 2 residues coordinate UDP-N-acetyl-alpha-D-glucosamine: Arg-332 and Lys-350. Catalysis depends on His-362, which acts as the Proton acceptor. UDP-N-acetyl-alpha-D-glucosamine is bound by residues Tyr-365 and Asn-376. Acetyl-CoA-binding positions include Ala-379, 385-386 (NY), Ser-404, Ala-422, and Arg-439.

This sequence in the N-terminal section; belongs to the N-acetylglucosamine-1-phosphate uridyltransferase family. The protein in the C-terminal section; belongs to the transferase hexapeptide repeat family. As to quaternary structure, homotrimer. Requires Mg(2+) as cofactor.

Its subcellular location is the cytoplasm. The enzyme catalyses alpha-D-glucosamine 1-phosphate + acetyl-CoA = N-acetyl-alpha-D-glucosamine 1-phosphate + CoA + H(+). The catalysed reaction is N-acetyl-alpha-D-glucosamine 1-phosphate + UTP + H(+) = UDP-N-acetyl-alpha-D-glucosamine + diphosphate. Its pathway is nucleotide-sugar biosynthesis; UDP-N-acetyl-alpha-D-glucosamine biosynthesis; N-acetyl-alpha-D-glucosamine 1-phosphate from alpha-D-glucosamine 6-phosphate (route II): step 2/2. It participates in nucleotide-sugar biosynthesis; UDP-N-acetyl-alpha-D-glucosamine biosynthesis; UDP-N-acetyl-alpha-D-glucosamine from N-acetyl-alpha-D-glucosamine 1-phosphate: step 1/1. The protein operates within bacterial outer membrane biogenesis; LPS lipid A biosynthesis. Catalyzes the last two sequential reactions in the de novo biosynthetic pathway for UDP-N-acetylglucosamine (UDP-GlcNAc). The C-terminal domain catalyzes the transfer of acetyl group from acetyl coenzyme A to glucosamine-1-phosphate (GlcN-1-P) to produce N-acetylglucosamine-1-phosphate (GlcNAc-1-P), which is converted into UDP-GlcNAc by the transfer of uridine 5-monophosphate (from uridine 5-triphosphate), a reaction catalyzed by the N-terminal domain. The chain is Bifunctional protein GlmU from Xanthomonas campestris pv. campestris (strain B100).